A 177-amino-acid polypeptide reads, in one-letter code: Large ribosomal subunit protein uL16 (177 aa).

It belongs to the universal ribosomal protein uL16 family.

This is Large ribosomal subunit protein uL16 from Natronomonas pharaonis (strain ATCC 35678 / DSM 2160 / CIP 103997 / JCM 8858 / NBRC 14720 / NCIMB 2260 / Gabara) (Halobacterium pharaonis).